Consider the following 443-residue polypeptide: Thymidine phosphorylase (443 aa).

Belongs to the thymidine/pyrimidine-nucleoside phosphorylase family. Homodimer.

The catalysed reaction is thymidine + phosphate = 2-deoxy-alpha-D-ribose 1-phosphate + thymine. It participates in pyrimidine metabolism; dTMP biosynthesis via salvage pathway; dTMP from thymine: step 1/2. Functionally, the enzymes which catalyze the reversible phosphorolysis of pyrimidine nucleosides are involved in the degradation of these compounds and in their utilization as carbon and energy sources, or in the rescue of pyrimidine bases for nucleotide synthesis. The polypeptide is Thymidine phosphorylase (Shewanella oneidensis (strain ATCC 700550 / JCM 31522 / CIP 106686 / LMG 19005 / NCIMB 14063 / MR-1)).